Consider the following 271-residue polypeptide: Troponin T, fast skeletal muscle (271 aa).

A compositionally biased stretch (acidic residues) spans 1-21; sequence MSDEEVEHVEEEYEEEEEAQE. Residues 1–74 are disordered; it reads MSDEEVEHVE…EKVDFDDIQK (74 aa). At Ser2 the chain carries N-acetylserine. Ser2 carries the post-translational modification Phosphoserine. Composition is skewed to basic and acidic residues over residues 29-53 and 62-74; these read EVHEVHEEVHEVHEPEEVQEEEKPR and PEGEKVDFDDIQK. Position 90 is a phosphoserine (Ser90). Basic and acidic residues predominate over residues 113-155; sequence RAERAEQQRIRAEKERERQNRLAEEKARREEEEAKRRAEDDLK. A disordered region spans residues 113–192; that stretch reads RAERAEQQRI…TAREMKKKVL (80 aa). Residues Ser161, Ser168, and Ser169 each carry the phosphoserine modification. Residues 183-192 are compositionally biased toward basic and acidic residues; it reads TAREMKKKVL. Position 205 is a phosphoserine (Ser205). A Phosphotyrosine modification is found at Tyr221. The segment at 249–271 is disordered; sequence DQAQKHSKKAGTTPKGKVGGRWK.

It belongs to the troponin T family.

In terms of biological role, troponin T is the tropomyosin-binding subunit of troponin, the thin filament regulatory complex which confers calcium-sensitivity to striated muscle actomyosin ATPase activity. In Sus scrofa (Pig), this protein is Troponin T, fast skeletal muscle (TNNT3).